A 350-amino-acid chain; its full sequence is Anthranilate phosphoribosyltransferase (350 aa).

5-phospho-alpha-D-ribose 1-diphosphate-binding positions include Gly93, 96–97 (GD), Thr101, 103–106 (NIST), 121–129 (KHGNRSASG), and Ser133. Gly93 is an anthranilate binding site. Ser105 is a Mg(2+) binding site. Asn124 lines the anthranilate pocket. Arg179 contributes to the anthranilate binding site. The Mg(2+) site is built by Asp238 and Glu239.

This sequence belongs to the anthranilate phosphoribosyltransferase family. As to quaternary structure, homodimer. Mg(2+) serves as cofactor.

It catalyses the reaction N-(5-phospho-beta-D-ribosyl)anthranilate + diphosphate = 5-phospho-alpha-D-ribose 1-diphosphate + anthranilate. It participates in amino-acid biosynthesis; L-tryptophan biosynthesis; L-tryptophan from chorismate: step 2/5. Functionally, catalyzes the transfer of the phosphoribosyl group of 5-phosphorylribose-1-pyrophosphate (PRPP) to anthranilate to yield N-(5'-phosphoribosyl)-anthranilate (PRA). The chain is Anthranilate phosphoribosyltransferase from Parasynechococcus marenigrum (strain WH8102).